Reading from the N-terminus, the 587-residue chain is MSMIDEPLYPIAVLIDELKNDDIQLRLNSIRRLSTIARALGEERTRKELIPFLSENNDDDDEVLLAMAEELGVFIPYVGGVEYAHVLLPPLETLSTVEETCVREKAVESLCRVGSQMRESDLVDHFISLVKRLAAGEWFTARVSACGVFHIAYPSAPDMLKTELRSLYTQLCQDDMPMVRRAAATNLGKFAATVESAHLKTDVMSMFEDLTQDDQDSVRLLAVEGCAALGKLLEPQDCVQHILPVIVNFSQDKSWRVRYMVANQLYELCEAVGPEPTRTELVPAYVRLLRDNEAEVRIAAAGKVTKFCRILNPEIAIQHILPCVKELSSDSSQHVRSALASVIMGMAPVLGKDATIEHLLPIFLSLLKDEFPDVRLNIISKLDQVNQVIGIDLLSQSLLPAIVELAEDRHWRVRLAIIEYIPLLASQLGVGFFDDKLGALCMQWLQDKVHSIRDAAANNLKRLAEEFGPEWAMQHIVPQVLEMVNNPHYLYRMTILRAVSLLAPVMGSEITCSKLLPVVMTASKDRVPNIKFNVAKVLQSLIPIVDQSVVEKTIRPGLVELSEDPDVDVRFFANQALQSIDNVMMSS.

S2 is modified (N-acetylserine). HEAT repeat units follow at residues 2–42 (SMID…ALGE), 44–80 (RTRKELIPFLSENNDDDDEVLLAMAEELGVFIPYVGG), 81–119 (VEYAHVLLPPLETLSTVEETCVREKAVESLCRVGSQMRE), 158–196 (DMLKTELRSLYTQLCQDDMPMVRRAAATNLGKFAATVES), 197–235 (AHLKTDVMSMFEDLTQDDQDSVRLLAVEGCAALGKLLEP), 236–274 (QDCVQHILPVIVNFSQDKSWRVRYMVANQLYELCEAVGP), 275–313 (EPTRTELVPAYVRLLRDNEAEVRIAAAGKVTKFCRILNP), 315–352 (IAIQHILPCVKELSSDSSQHVRSALASVIMGMAPVLGK), 353–391 (DATIEHLLPIFLSLLKDEFPDVRLNIISKLDQVNQVIGI), 393–430 (LLSQSLLPAIVELAEDRHWRVRLAIIEYIPLLASQLGV), 432–469 (FFDDKLGALCMQWLQDKVHSIRDAAANNLKRLAEEFGP), 470–508 (EWAMQHIVPQVLEMVNNPHYLYRMTILRAVSLLAPVMGS), 509–547 (EITCSKLLPVVMTASKDRVPNIKFNVAKVLQSLIPIVDQ), and 549–586 (VVEKTIRPGLVELSEDPDVDVRFFANQALQSIDNVMMS).

Belongs to the phosphatase 2A regulatory subunit A family. As to quaternary structure, PP2A consists of a common heterodimeric core enzyme, composed of a 36 kDa catalytic subunit (subunit C) and a 65 kDa constant regulatory subunit (subunit A), that associates with a variety of regulatory subunits such as subunits B (the R2/B/PR55/B55, R3/B''/PR72/PR130/PR59 and R5/B'/B56 families). Interacts with B'THETA. Interacts with SRK2E/OST1. Interacts with SIC/RON3. As to expression, ubiquitous, with higher levels in roots and flowers (at protein level).

Its subcellular location is the cytoplasm. The protein localises to the cytosol. It is found in the nucleus. The protein resides in the peroxisome. Its function is as follows. The A subunit of protein phosphatase 2A serves as a scaffolding molecule to coordinate the assembly of the catalytic subunit and a variable regulatory B subunit. Involved during developmental process such as seedling and floral developments. Seems to act as a negative regulator of PP2A catalytic activity. Associates with the serine/threonine-protein phosphatase PP2A catalytic subunit C and regulatory subunit B' to positively regulates beta-oxidation of fatty acids and protoauxins in peroxisomes by dephosphorylating peroxisomal beta-oxidation-related proteins. In Arabidopsis thaliana (Mouse-ear cress), this protein is Serine/threonine-protein phosphatase 2A 65 kDa regulatory subunit A beta isoform (PP2AA2).